Reading from the N-terminus, the 220-residue chain is Translation initiation factor 6 (220 aa).

This sequence belongs to the eIF-6 family.

In terms of biological role, binds to the 50S ribosomal subunit and prevents its association with the 30S ribosomal subunit to form the 70S initiation complex. The sequence is that of Translation initiation factor 6 from Methanoculleus marisnigri (strain ATCC 35101 / DSM 1498 / JR1).